The chain runs to 208 residues: Uracil phosphoribosyltransferase (208 aa).

Residues R78, R103, and 130 to 138 (DPMLATGGS) contribute to the 5-phospho-alpha-D-ribose 1-diphosphate site. Uracil is bound by residues I193 and 198–200 (GDA). D199 serves as a coordination point for 5-phospho-alpha-D-ribose 1-diphosphate.

This sequence belongs to the UPRTase family. Mg(2+) serves as cofactor.

The catalysed reaction is UMP + diphosphate = 5-phospho-alpha-D-ribose 1-diphosphate + uracil. It functions in the pathway pyrimidine metabolism; UMP biosynthesis via salvage pathway; UMP from uracil: step 1/1. Allosterically activated by GTP. Catalyzes the conversion of uracil and 5-phospho-alpha-D-ribose 1-diphosphate (PRPP) to UMP and diphosphate. The sequence is that of Uracil phosphoribosyltransferase from Photorhabdus laumondii subsp. laumondii (strain DSM 15139 / CIP 105565 / TT01) (Photorhabdus luminescens subsp. laumondii).